Consider the following 375-residue polypeptide: Putrescine N-methyltransferase 1 (375 aa).

Polar residues-rich tracts occupy residues 24–50 (HQNG…QNGT) and 57–77 (HQNG…GNEL). The interval 24–77 (HQNGTSEHLNGYQNGTSKHQNGHQNGTFEHRNGHQNGTSEQQNGTISHDNGNEL) is disordered. A PABS domain is found at 86–323 (PGWFSEFSAL…GVIGYMLCST (238 aa)). S-adenosyl-L-methionine-binding positions include Q117, E192, and 223 to 224 (DG). D242 functions as the Proton acceptor in the catalytic mechanism. Position 311 (Y311) interacts with S-adenosyl-L-methionine.

It belongs to the class I-like SAM-binding methyltransferase superfamily. Putrescine methyltransferase family. Predominantly expressed in roots.

The catalysed reaction is putrescine + S-adenosyl-L-methionine = N-methylputrescine + S-adenosyl-L-homocysteine + H(+). It functions in the pathway alkaloid biosynthesis; nicotine biosynthesis. In terms of biological role, involved in the biosynthesis of pyridine alkaloid natural products, leading mainly to the production of anabasine, anatabine, nicotine and nornicotine, effective deterrents against herbivores with antiparasitic and pesticide properties (neurotoxins); nornicotine serves as the precursor in the synthesis of the carcinogen compound N'-nitrosonornicotine (NNN). Methyltransferase that mediates the conversion of putrescine to N-methylputrescine. Promotes leaves ripening. The polypeptide is Putrescine N-methyltransferase 1 (Nicotiana tabacum (Common tobacco)).